The primary structure comprises 421 residues: Granaticin polyketide putative beta-ketoacyl synthase 1 (421 aa).

The Ketosynthase family 3 (KS3) domain occupies 2–416; it reads TRRVVITGVG…GFQSAMVLHR (415 aa). Active-site for beta-ketoacyl synthase activity residues include cysteine 169, histidine 309, and histidine 346.

This sequence belongs to the thiolase-like superfamily. Beta-ketoacyl-ACP synthases family.

It participates in antibiotic biosynthesis; granaticin biosynthesis. The protein is Granaticin polyketide putative beta-ketoacyl synthase 1 (gra-orf1) of Streptomyces violaceoruber.